A 41-amino-acid polypeptide reads, in one-letter code: Large ribosomal subunit protein bL36 (41 aa).

Belongs to the bacterial ribosomal protein bL36 family.

This is Large ribosomal subunit protein bL36 from Brucella abortus (strain S19).